Consider the following 211-residue polypeptide: FMN-dependent NADH:quinone oxidoreductase (211 aa).

FMN is bound by residues serine 10 and 16-18; that span reads STS.

This sequence belongs to the azoreductase type 1 family. In terms of assembly, homodimer. FMN is required as a cofactor.

The enzyme catalyses 2 a quinone + NADH + H(+) = 2 a 1,4-benzosemiquinone + NAD(+). The catalysed reaction is N,N-dimethyl-1,4-phenylenediamine + anthranilate + 2 NAD(+) = 2-(4-dimethylaminophenyl)diazenylbenzoate + 2 NADH + 2 H(+). In terms of biological role, quinone reductase that provides resistance to thiol-specific stress caused by electrophilic quinones. Functionally, also exhibits azoreductase activity. Catalyzes the reductive cleavage of the azo bond in aromatic azo compounds to the corresponding amines. In Frankia casuarinae (strain DSM 45818 / CECT 9043 / HFP020203 / CcI3), this protein is FMN-dependent NADH:quinone oxidoreductase.